The following is a 668-amino-acid chain: MVFNCYPVANAEESPMSSQNPTTVAWWSVRMRATGTLDDEPYHVSGAESLVAPGMIEQTVAGLTQRALAPGHTVKARQVRVSLDQLDVEPTIIPALPTELKECPDPVAARQYFVDVLSRFVPHPAEALRVLTEGPTMRGAAMVEAGTDRRLEADPLRGVRVTKFGDLTESAPGASLAHKKHHHEAVLLASKVAAAPGVLAEFCISDDPHYTRGYVCVDGVYTTVTNVKADGDPNGGRVILVDTARADPTTITTWLENHPVLIGPATASSQKATSWHGHLCGRLNAWRAAGLERRPRTFCSAQDPDAVTTDGPALLFSSSDYLGLSTEPKVQQAMNNTVRRLGSSSGGSRLTTGTSVAHHQAEHEIAAWLGYPQAVFMASGYQANIATIQLLADPHVTVISDAENHASLIDGCRLARARTVVVPHADLDVIDTALDCVTTDRALVLTEGVYSMGGDVAPVGELVEIAHRHGALVVVDDAHGIGTVGPTGRGATEELPASQRPDVLLGTASKALGVEGGFACLDETLATLMRNCARGYVFSSAPSPVVAAGVAAAVEYLRTDTRRVCSLQANVAQARLLLAEADLIPPSAAHDRGPIIRIPVGPESRAVAAQEELARRGLMVGAIRYPAVARGDAILRICLTARHTDEHIRILVTSLREVLDGALSDAPR.

Arg-293 provides a ligand contact to substrate. 380-381 contributes to the pyridoxal 5'-phosphate binding site; that stretch reads GY. His-405 is a binding site for substrate. Pyridoxal 5'-phosphate is bound by residues Ser-451, 476–479, and 507–510; these read DDAH and TASK. Residue Lys-510 is modified to N6-(pyridoxal phosphate)lysine.

The protein in the N-terminal section; belongs to the BioW family. It in the C-terminal section; belongs to the class-II pyridoxal-phosphate-dependent aminotransferase family. BioF subfamily. As to quaternary structure, homodimer. Mg(2+) serves as cofactor. The cofactor is pyridoxal 5'-phosphate.

It carries out the reaction heptanedioate + ATP + CoA = 6-carboxyhexanoyl-CoA + AMP + diphosphate. The enzyme catalyses 6-carboxyhexanoyl-[ACP] + L-alanine + H(+) = (8S)-8-amino-7-oxononanoate + holo-[ACP] + CO2. It functions in the pathway metabolic intermediate metabolism; pimeloyl-CoA biosynthesis; pimeloyl-CoA from pimelate: step 1/1. Its pathway is cofactor biosynthesis; biotin biosynthesis. Its function is as follows. Catalyzes both the decarboxylative condensation of pimeloyl-[acyl-carrier protein] and L-alanine to produce 8-amino-7-oxononanoate (AON), [acyl-carrier protein], and carbon dioxide, and the transformation of pimelate into pimeloyl-CoA with concomitant hydrolysis of ATP to AMP. This chain is Biotin biosynthesis bifunctional protein BioWF, found in Cutibacterium acnes (strain SK137) (Propionibacterium acnes).